A 532-amino-acid chain; its full sequence is Phosphoenolpyruvate carboxykinase (ATP) (532 aa).

Residues R60, Y194, and K200 each contribute to the substrate site. Residues K200, H219, and 237–245 (GLSGTGKTT) each bind ATP. Mn(2+) contacts are provided by K200 and H219. Position 258 (D258) interacts with Mn(2+). Residues E286, R324, and T449 each coordinate ATP. Substrate is bound at residue R324.

This sequence belongs to the phosphoenolpyruvate carboxykinase (ATP) family. Requires Mn(2+) as cofactor.

The protein localises to the cytoplasm. It catalyses the reaction oxaloacetate + ATP = phosphoenolpyruvate + ADP + CO2. It participates in carbohydrate biosynthesis; gluconeogenesis. Involved in the gluconeogenesis. Catalyzes the conversion of oxaloacetate (OAA) to phosphoenolpyruvate (PEP) through direct phosphoryl transfer between the nucleoside triphosphate and OAA. The polypeptide is Phosphoenolpyruvate carboxykinase (ATP) (Roseobacter denitrificans (strain ATCC 33942 / OCh 114) (Erythrobacter sp. (strain OCh 114))).